An 84-amino-acid polypeptide reads, in one-letter code: U4-theraphotoxin-Hhn1b (84 aa).

The N-terminal stretch at 1 to 22 (MKVTLIAILTCAAVLVLHTTAA) is a signal peptide. A propeptide spanning residues 23 to 47 (EELEESQLMEVGMPDTELAAVDEER) is cleaved from the precursor. 3 cysteine pairs are disulfide-bonded: Cys51-Cys65, Cys55-Cys76, and Cys70-Cys81.

The protein belongs to the neurotoxin 12 (Hwtx-2) family. 02 (Hwtx-2) subfamily. In terms of tissue distribution, expressed by the venom gland.

The protein resides in the secreted. Functionally, postsynaptic neurotoxin. In Cyriopagopus hainanus (Chinese bird spider), this protein is U4-theraphotoxin-Hhn1b.